The chain runs to 193 residues: Ion-translocating oxidoreductase complex subunit A (193 aa).

A run of 6 helical transmembrane segments spans residues 5-25 (LLLF…FLGL), 47-67 (FVMT…LIPL), 72-92 (LRTL…EMVV), 102-122 (LLGI…VALL), 134-154 (ALYG…FAAI), and 171-191 (AIAL…SGLV).

Belongs to the NqrDE/RnfAE family. As to quaternary structure, the complex is composed of six subunits: RsxA, RsxB, RsxC, RsxD, RsxE and RsxG.

Its subcellular location is the cell inner membrane. Functionally, part of a membrane-bound complex that couples electron transfer with translocation of ions across the membrane. Required to maintain the reduced state of SoxR. The sequence is that of Ion-translocating oxidoreductase complex subunit A from Salmonella agona (strain SL483).